The chain runs to 314 residues: MIIITGPTAVGKTDLSIAICCKLNAEIVSIDSRQLYRYMDIGTGKPTLSQRKIVRHHLIDIVDPDEYYSVYQFRLDAIRAIQDIVKRGKIPLFAGGTGLYIDSLVRGIFEGVSRDEELRKQLLQKETQCPGVLRSMLERIDPELADRIHKNDLKRTVRALEIWIKSKEKPSELRKKVKPVGRFTVIILHRDREELYDRINLRVNEMFQAGLLDEVKDLMKRGYSKNLNALRTIGYQESIAHLEGKLNFESTVELVKKNTRHFARRQVIWFRRYKDAIVIDLSSSSYRDAVNTISRIVLQDFQHDSFYDGGFSYD.

Residue 6 to 13 (GPTAVGKT) participates in ATP binding. 8–13 (TAVGKT) contributes to the substrate binding site. An interaction with substrate tRNA region spans residues 31-34 (DSRQ).

The protein belongs to the IPP transferase family. As to quaternary structure, monomer. Mg(2+) is required as a cofactor.

The enzyme catalyses adenosine(37) in tRNA + dimethylallyl diphosphate = N(6)-dimethylallyladenosine(37) in tRNA + diphosphate. Its function is as follows. Catalyzes the transfer of a dimethylallyl group onto the adenine at position 37 in tRNAs that read codons beginning with uridine, leading to the formation of N6-(dimethylallyl)adenosine (i(6)A). The polypeptide is tRNA dimethylallyltransferase (Pseudothermotoga lettingae (strain ATCC BAA-301 / DSM 14385 / NBRC 107922 / TMO) (Thermotoga lettingae)).